The chain runs to 349 residues: Glycerol-3-phosphate dehydrogenase [NAD(+)], cytoplasmic (349 aa).

NAD(+) contacts are provided by residues 10–15, Lys120, and Ala153; that span reads GSGDWG. Residue Lys120 participates in substrate binding. Residue Ser154 is modified to Phosphoserine. Lys204 (proton acceptor) is an active-site residue. Arg269 provides a ligand contact to NAD(+). 269 to 270 is a substrate binding site; that stretch reads RN. Lys289 bears the N6-succinyllysine mark. Lys296 and Gln298 together coordinate NAD(+). Tyr326 carries the phosphotyrosine modification.

It belongs to the NAD-dependent glycerol-3-phosphate dehydrogenase family. In terms of assembly, homodimer.

It is found in the cytoplasm. It carries out the reaction sn-glycerol 3-phosphate + NAD(+) = dihydroxyacetone phosphate + NADH + H(+). Its function is as follows. Has glycerol-3-phosphate dehydrogenase activity. The polypeptide is Glycerol-3-phosphate dehydrogenase [NAD(+)], cytoplasmic (GPD1) (Oryctolagus cuniculus (Rabbit)).